The chain runs to 238 residues: IkB-like protein (238 aa).

ANK repeat units follow at residues 48–77, 86–115, 123–152, and 157–187; these read GSSV…PGEI, DGNS…KNGT, NGMT…DPTQ, and RGFT…PLYM. Positions 80 to 86 match the Nuclear localization signal motif; it reads PHRRDKD. A Nuclear localization signal motif is present at residues 202 to 213; the sequence is KKKPKIIITGCK. The PxIxITxC motif; Interaction with host PPP3CA signature appears at 205–212; it reads PKIIITGC. The FLCV motif motif lies at 227–230; the sequence is FLCV.

Belongs to the asfivirus A238L family. Interacts with host PPIA. Interacts with host PPP3CA/Calcineurin. Interacts with host RELA/p65; interaction of the 32 kDa form with host RELA results in the formation of a stable complex with NF-kappa-B. Interacts with host PPP3R1. Interacts with host EP300; this interaction inhibits the association of host EP300 with host RELA, JUN and NFATC2. Post-translationally, the protein exists in a 28 kDa and a 32 kDa form, probably due to post-translational modifications which are neither phosphorylation, nor sumoylation.

It is found in the host nucleus. The protein resides in the host cytoplasm. Its function is as follows. I-kappa-B- (IkB)-like protein that inhibits the binding of NF-kappa-B to DNA, thereby down-regulating pro-inflammatory cytokine production. Forms a heterodimer with the NF-kappa-B subunit RELA/p65 and prevents the activation of the NF-kappa-B transcription factor. Also inhibits the host calcineurin phosphatase activity, which is required for the induction of nuclear factor of activated T cells(NFAT)-dependent immune response genes. Inhibits calcineurin function, which is required for the induction of nuclear factor of activated T cells (NFAT)-dependent immune response genes. Prevents the binding of substrates to calcineurin without affecting the phosphatase activity. Does not contain the serine residues that are phosphorylated by host IkB kinase and thus is not degraded following stimulation of the NFkB pathway. The protein is IkB-like protein (A238L) of African swine fever virus (strain Badajoz 1971 Vero-adapted) (Ba71V).